Reading from the N-terminus, the 385-residue chain is Initiation-specific alpha-1,6-mannosyltransferase (385 aa).

Residues 1 to 15 lie on the Cytoplasmic side of the membrane; it reads MLQLREPQMVHKHLK. The helical; Signal-anchor for type II membrane protein transmembrane segment at 16–36 threads the bilayer; the sequence is LAVLGIVVIFTTYFIISSLSS. At 37–385 the chain is on the lumenal side; that stretch reads PTSTHKTEYN…KDDGMPEMEQ (349 aa). The short motif at 189–191 is the DXD motif element; sequence DID.

This sequence belongs to the glycosyltransferase 32 family. The cofactor is Mn(2+).

The protein localises to the endoplasmic reticulum membrane. It is found in the golgi apparatus membrane. It catalyses the reaction Transfers an alpha-D-mannosyl residue from GDP-mannose into lipid-linked oligosaccharide, forming an alpha-(1-&gt;6)-D-mannosyl-D-mannose linkage.. Functionally, mannosyltransferase involved in outer chain elongation of asparagine-linked oligosaccharides of the type Man(9)GlcNAc(2). Adds the first alpha-1,6-mannose to the Man(8)GlcNAc(2) and Man(9)GlcNAc(2), but not Man(5)GlcNAc(2), endoplasmic reticulum intermediates. Represents the first enzymatic event required for synthesis of outer chain mannose linkages on yeast secretory proteins. N-glycan outer chain epitopes play a crucial role in the host-fungal interaction, virulence, and host immune response such as interleukin synthesis or phagocytosis by neutrophils. This chain is Initiation-specific alpha-1,6-mannosyltransferase, found in Candida albicans (strain SC5314 / ATCC MYA-2876) (Yeast).